Consider the following 752-residue polypeptide: GTPase-activating protein rrc-1 (752 aa).

One can recognise an SH3 domain in the interval 165–244 (PAIAAAVVTK…PRDCVMLIDD (80 aa)). In terms of domain architecture, Rho-GAP spans 281–463 (LELTELFMRT…FCIENSDSLF (183 aa)). Disordered stretches follow at residues 523–552 (STGE…ATFQ) and 582–609 (RSMR…GANN).

Its function is as follows. Functions as a GTPase-activating protein (GAP) for ced-10/RAC-1 and CDC42. The protein is GTPase-activating protein rrc-1 of Caenorhabditis briggsae.